The primary structure comprises 325 residues: Quinolinate synthase (325 aa).

2 residues coordinate iminosuccinate: histidine 41 and serine 58. Cysteine 103 contacts [4Fe-4S] cluster. Iminosuccinate-binding positions include 129-131 and serine 146; that span reads YIN. [4Fe-4S] cluster is bound at residue cysteine 189. Iminosuccinate contacts are provided by residues 215 to 217 and threonine 232; that span reads HPE. Cysteine 282 is a binding site for [4Fe-4S] cluster.

This sequence belongs to the quinolinate synthase family. Type 2 subfamily. [4Fe-4S] cluster is required as a cofactor.

The protein resides in the cytoplasm. The catalysed reaction is iminosuccinate + dihydroxyacetone phosphate = quinolinate + phosphate + 2 H2O + H(+). Its pathway is cofactor biosynthesis; NAD(+) biosynthesis; quinolinate from iminoaspartate: step 1/1. Its function is as follows. Catalyzes the condensation of iminoaspartate with dihydroxyacetone phosphate to form quinolinate. In Rippkaea orientalis (strain PCC 8801 / RF-1) (Cyanothece sp. (strain PCC 8801)), this protein is Quinolinate synthase.